The following is a 159-amino-acid chain: uncharacterized protein (159 aa).

The protein localises to the mitochondrion. This is an uncharacterized protein from Arabidopsis thaliana (Mouse-ear cress).